The chain runs to 147 residues: Large ribosomal subunit protein uL15 (147 aa).

The segment covering Met1–Val15 has biased composition (basic residues). Residues Met1–Leu34 are disordered.

This sequence belongs to the universal ribosomal protein uL15 family.

The sequence is that of Large ribosomal subunit protein uL15 (RPL27A) from Encephalitozoon cuniculi (strain GB-M1) (Microsporidian parasite).